A 689-amino-acid polypeptide reads, in one-letter code: Glycine--tRNA ligase beta subunit (689 aa).

It belongs to the class-II aminoacyl-tRNA synthetase family. In terms of assembly, tetramer of two alpha and two beta subunits.

The protein resides in the cytoplasm. The enzyme catalyses tRNA(Gly) + glycine + ATP = glycyl-tRNA(Gly) + AMP + diphosphate. This Mannheimia succiniciproducens (strain KCTC 0769BP / MBEL55E) protein is Glycine--tRNA ligase beta subunit.